A 169-amino-acid chain; its full sequence is UPF0303 protein BCAN_A1444 (169 aa).

The protein belongs to the UPF0303 family.

The protein is UPF0303 protein BCAN_A1444 of Brucella canis (strain ATCC 23365 / NCTC 10854 / RM-666).